A 304-amino-acid chain; its full sequence is Acetyl-coenzyme A carboxylase carboxyl transferase subunit beta (304 aa).

One can recognise a CoA carboxyltransferase N-terminal domain in the interval 23–292; the sequence is VWTKCDSCGQ…PNPDAPREGV (270 aa). Residues Cys27, Cys30, Cys46, and Cys49 each coordinate Zn(2+). The segment at 27–49 adopts a C4-type zinc-finger fold; sequence CDSCGQVLYRAELERNLEVCPKC. The interval 283–304 is disordered; sequence PNPDAPREGVVVPPAPDQESEA.

This sequence belongs to the AccD/PCCB family. As to quaternary structure, acetyl-CoA carboxylase is a heterohexamer composed of biotin carboxyl carrier protein (AccB), biotin carboxylase (AccC) and two subunits each of ACCase subunit alpha (AccA) and ACCase subunit beta (AccD). Zn(2+) is required as a cofactor.

Its subcellular location is the cytoplasm. The catalysed reaction is N(6)-carboxybiotinyl-L-lysyl-[protein] + acetyl-CoA = N(6)-biotinyl-L-lysyl-[protein] + malonyl-CoA. Its pathway is lipid metabolism; malonyl-CoA biosynthesis; malonyl-CoA from acetyl-CoA: step 1/1. In terms of biological role, component of the acetyl coenzyme A carboxylase (ACC) complex. Biotin carboxylase (BC) catalyzes the carboxylation of biotin on its carrier protein (BCCP) and then the CO(2) group is transferred by the transcarboxylase to acetyl-CoA to form malonyl-CoA. The protein is Acetyl-coenzyme A carboxylase carboxyl transferase subunit beta of Salmonella agona (strain SL483).